We begin with the raw amino-acid sequence, 453 residues long: GTPase Der (453 aa).

2 EngA-type G domains span residues 4-169 and 177-352; these read PIVA…SETP and IKVA…RQFE. Residues 10–17, 57–61, 120–123, 183–190, 230–234, and 295–298 contribute to the GTP site; these read GRPNVGKS, DTGGL, NKCE, DTAGI, and NKWD. A KH-like domain is found at 353–438; the sequence is QRVTTSVINE…PIRLLWRGKK (86 aa).

The protein belongs to the TRAFAC class TrmE-Era-EngA-EngB-Septin-like GTPase superfamily. EngA (Der) GTPase family. As to quaternary structure, associates with the 50S ribosomal subunit.

Its function is as follows. GTPase that plays an essential role in the late steps of ribosome biogenesis. The protein is GTPase Der of Acaryochloris marina (strain MBIC 11017).